A 779-amino-acid polypeptide reads, in one-letter code: Endonuclease MutS2 (779 aa).

328–335 (GPNTGGKT) contributes to the ATP binding site. The region spanning 704–779 (LDLRGKRYEE…GSGATIVTLG (76 aa)) is the Smr domain.

Belongs to the DNA mismatch repair MutS family. MutS2 subfamily. Homodimer. Binds to stalled ribosomes, contacting rRNA.

In terms of biological role, endonuclease that is involved in the suppression of homologous recombination and thus may have a key role in the control of bacterial genetic diversity. Functionally, acts as a ribosome collision sensor, splitting the ribosome into its 2 subunits. Detects stalled/collided 70S ribosomes which it binds and splits by an ATP-hydrolysis driven conformational change. Acts upstream of the ribosome quality control system (RQC), a ribosome-associated complex that mediates the extraction of incompletely synthesized nascent chains from stalled ribosomes and their subsequent degradation. Probably generates substrates for RQC. The sequence is that of Endonuclease MutS2 from Streptococcus pyogenes serotype M18 (strain MGAS8232).